Consider the following 387-residue polypeptide: Queuine tRNA-ribosyltransferase (387 aa).

Catalysis depends on D105, which acts as the Proton acceptor. Substrate contacts are provided by residues 105 to 109 (DSGGF), D177, and G248. The RNA binding stretch occupies residues 278 to 284 (GIGDLPS). D297 serves as the catalytic Nucleophile. The RNA binding; important for wobble base 34 recognition stretch occupies residues 302 to 306 (TRAAR). C335, C337, C340, and H366 together coordinate Zn(2+).

The protein belongs to the queuine tRNA-ribosyltransferase family. In terms of assembly, homodimer. Within each dimer, one monomer is responsible for RNA recognition and catalysis, while the other monomer binds to the replacement base PreQ1. Zn(2+) serves as cofactor.

It carries out the reaction 7-aminomethyl-7-carbaguanine + guanosine(34) in tRNA = 7-aminomethyl-7-carbaguanosine(34) in tRNA + guanine. It functions in the pathway tRNA modification; tRNA-queuosine biosynthesis. Catalyzes the base-exchange of a guanine (G) residue with the queuine precursor 7-aminomethyl-7-deazaguanine (PreQ1) at position 34 (anticodon wobble position) in tRNAs with GU(N) anticodons (tRNA-Asp, -Asn, -His and -Tyr). Catalysis occurs through a double-displacement mechanism. The nucleophile active site attacks the C1' of nucleotide 34 to detach the guanine base from the RNA, forming a covalent enzyme-RNA intermediate. The proton acceptor active site deprotonates the incoming PreQ1, allowing a nucleophilic attack on the C1' of the ribose to form the product. After dissociation, two additional enzymatic reactions on the tRNA convert PreQ1 to queuine (Q), resulting in the hypermodified nucleoside queuosine (7-(((4,5-cis-dihydroxy-2-cyclopenten-1-yl)amino)methyl)-7-deazaguanosine). The protein is Queuine tRNA-ribosyltransferase of Protochlamydia amoebophila (strain UWE25).